A 197-amino-acid polypeptide reads, in one-letter code: Adenine phosphoribosyltransferase (197 aa).

This sequence belongs to the purine/pyrimidine phosphoribosyltransferase family. As to quaternary structure, homodimer.

It localises to the cytoplasm. The enzyme catalyses AMP + diphosphate = 5-phospho-alpha-D-ribose 1-diphosphate + adenine. It functions in the pathway purine metabolism; AMP biosynthesis via salvage pathway; AMP from adenine: step 1/1. In terms of biological role, catalyzes a salvage reaction resulting in the formation of AMP, that is energically less costly than de novo synthesis. In Ralstonia nicotianae (strain ATCC BAA-1114 / GMI1000) (Ralstonia solanacearum), this protein is Adenine phosphoribosyltransferase.